The primary structure comprises 289 residues: Probable phosphoribulokinase (289 aa).

12 to 20 (GSSGAGTTT) contributes to the ATP binding site.

This sequence belongs to the phosphoribulokinase family.

It carries out the reaction D-ribulose 5-phosphate + ATP = D-ribulose 1,5-bisphosphate + ADP + H(+). The protein is Probable phosphoribulokinase (prkB) of Escherichia coli (strain K12).